Here is a 350-residue protein sequence, read N- to C-terminus: UDP-N-acetylenolpyruvoylglucosamine reductase (350 aa).

The region spanning 24–195 (HVEATARWLL…VAVEFNLPLL (172 aa)) is the FAD-binding PCMH-type domain. The active site involves Arg-172. Ser-245 acts as the Proton donor in catalysis. Glu-342 is a catalytic residue.

Belongs to the MurB family. FAD serves as cofactor.

The protein resides in the cytoplasm. It catalyses the reaction UDP-N-acetyl-alpha-D-muramate + NADP(+) = UDP-N-acetyl-3-O-(1-carboxyvinyl)-alpha-D-glucosamine + NADPH + H(+). Its pathway is cell wall biogenesis; peptidoglycan biosynthesis. Its function is as follows. Cell wall formation. This chain is UDP-N-acetylenolpyruvoylglucosamine reductase, found in Xanthomonas oryzae pv. oryzae (strain PXO99A).